The sequence spans 281 residues: uncharacterized protein (281 aa).

It is found in the plastid. It localises to the chloroplast. This is an uncharacterized protein from Euglena gracilis.